A 456-amino-acid chain; its full sequence is Bifunctional protein GlmU (456 aa).

Residues 1 to 228 are pyrophosphorylase; sequence MPQNTLNIVI…SHLAAGVNNK (228 aa). Residues 11 to 14, lysine 25, glutamine 75, 80 to 81, 102 to 104, glycine 138, glutamate 153, asparagine 168, and asparagine 226 each bind UDP-N-acetyl-alpha-D-glucosamine; these read LAAG, GT, and YGD. Aspartate 104 contacts Mg(2+). Asparagine 226 provides a ligand contact to Mg(2+). Positions 229-249 are linker; the sequence is LQLTELERIFQTEQAQELLKA. The interval 250-456 is N-acetyltransferase; it reads GVTLRDPARF…GWVRPEKDKQ (207 aa). Positions 332 and 350 each coordinate UDP-N-acetyl-alpha-D-glucosamine. Histidine 362 acts as the Proton acceptor in catalysis. UDP-N-acetyl-alpha-D-glucosamine is bound by residues tyrosine 365 and asparagine 376. Acetyl-CoA contacts are provided by residues alanine 379, 385-386, serine 404, alanine 422, and arginine 439; that span reads NY.

In the N-terminal section; belongs to the N-acetylglucosamine-1-phosphate uridyltransferase family. The protein in the C-terminal section; belongs to the transferase hexapeptide repeat family. As to quaternary structure, homotrimer. Mg(2+) is required as a cofactor.

It localises to the cytoplasm. It carries out the reaction alpha-D-glucosamine 1-phosphate + acetyl-CoA = N-acetyl-alpha-D-glucosamine 1-phosphate + CoA + H(+). The enzyme catalyses N-acetyl-alpha-D-glucosamine 1-phosphate + UTP + H(+) = UDP-N-acetyl-alpha-D-glucosamine + diphosphate. It participates in nucleotide-sugar biosynthesis; UDP-N-acetyl-alpha-D-glucosamine biosynthesis; N-acetyl-alpha-D-glucosamine 1-phosphate from alpha-D-glucosamine 6-phosphate (route II): step 2/2. Its pathway is nucleotide-sugar biosynthesis; UDP-N-acetyl-alpha-D-glucosamine biosynthesis; UDP-N-acetyl-alpha-D-glucosamine from N-acetyl-alpha-D-glucosamine 1-phosphate: step 1/1. It functions in the pathway bacterial outer membrane biogenesis; LPS lipid A biosynthesis. In terms of biological role, catalyzes the last two sequential reactions in the de novo biosynthetic pathway for UDP-N-acetylglucosamine (UDP-GlcNAc). The C-terminal domain catalyzes the transfer of acetyl group from acetyl coenzyme A to glucosamine-1-phosphate (GlcN-1-P) to produce N-acetylglucosamine-1-phosphate (GlcNAc-1-P), which is converted into UDP-GlcNAc by the transfer of uridine 5-monophosphate (from uridine 5-triphosphate), a reaction catalyzed by the N-terminal domain. The polypeptide is Bifunctional protein GlmU (Neisseria meningitidis serogroup B (strain ATCC BAA-335 / MC58)).